We begin with the raw amino-acid sequence, 305 residues long: MAGAVPQFMVDEYVLAYHGPLLYEARVILAEVWDESNTLLGTVGPHYFIHYKGWKQTWDEWVPESRLLKLNEAGFAKRRALLDAQAKKGRSTGGSGGTGSPGAGKGGLKDKKKDTKKRGRDAMESESDFMKRPEVKIVIPDVLKLVLVDDWENVTKNNQLVALPRKPNVRELLEEYRQYASASKKQERSDRATALLSEIISGITLYFDKALGNNLLYRFERAQYVEQKRQNPEKPMSEIYGAEHLLRLFVNFGPFIAYTNIDTESLNILRDYINDIMQWMIKEQKRLFMKEYEETTTHYQNLSRS.

The Tudor-knot domain occupies 14–67; the sequence is VLAYHGPLLYEARVILAEVWDESNTLLGTVGPHYFIHYKGWKQTWDEWVPESRL. Residues 86-127 are disordered; sequence AKKGRSTGGSGGTGSPGAGKGGLKDKKKDTKKRGRDAMESES. Gly residues predominate over residues 91 to 106; the sequence is STGGSGGTGSPGAGKG. The region spanning 131 to 304 is the MRG domain; that stretch reads KRPEVKIVIP…TTTHYQNLSR (174 aa).

It belongs to the MRG family. As to quaternary structure, component of the NuA4 histone acetyltransferase complex.

Its subcellular location is the nucleus. Involved in deacetylation of histones, chromatin assembly and chromosome segregation. May act as a transcriptional oscillator, directing histone deacetylases to specific chromosomal domains. Component of the NuA4 histone acetyltransferase complex which is involved in transcriptional activation of selected genes principally by acetylation of nucleosomal histone H4 and H2A. The NuA4 complex is also involved in DNA repair. The sequence is that of Chromatin modification-related protein EAF3 (EAF3) from Cryptococcus neoformans var. neoformans serotype D (strain B-3501A) (Filobasidiella neoformans).